The sequence spans 155 residues: Small ribosomal subunit protein uS7c (155 aa).

This sequence belongs to the universal ribosomal protein uS7 family. In terms of assembly, part of the 30S ribosomal subunit.

The protein localises to the plastid. It localises to the chloroplast. One of the primary rRNA binding proteins, it binds directly to 16S rRNA where it nucleates assembly of the head domain of the 30S subunit. The protein is Small ribosomal subunit protein uS7c (rps7) of Cabomba caroliniana (Carolina fanwort).